A 332-amino-acid chain; its full sequence is Autoinducer 2 import system permease protein LsrD (332 aa).

Helical transmembrane passes span 7-27, 45-65, 70-90, 91-111, 118-138, 162-182, 216-236, 240-260, 261-281, and 288-308; these read YSWEIALAALLIFEILAFGVI, ICIGIVALPLTMVIVSGGMDI, TIGLCAITLGVLFQLGMPLPL, AIIITLLLGAICGLINAGLII, LVITLGTMYLFGGSALLLSGM, FLGIPMPLIFFLVCCLFFWLL, VYAMTGCASAIAAVLLVSYFG, SDLGASFLMPAITAVVLGGAN, IYGGSGSIMGSALAALLVGFL, and AGVPNQISSALSGALLIVVVV.

Belongs to the binding-protein-dependent transport system permease family. AraH/RbsC subfamily. In terms of assembly, the complex is composed of two ATP-binding proteins (LsrA), two transmembrane proteins (LsrC and LsrD) and a solute-binding protein (LsrB).

The protein localises to the cell inner membrane. Functionally, part of the ABC transporter complex LsrABCD involved in autoinducer 2 (AI-2) import. Probably responsible for the translocation of the substrate across the membrane. The protein is Autoinducer 2 import system permease protein LsrD (lsrD) of Salmonella paratyphi A (strain ATCC 9150 / SARB42).